The following is an 847-amino-acid chain: Bifunctional protein argC, mitochondrial (847 aa).

Positions 100 to 331 are acetylglutamate kinase; that stretch reads QIVLVKIGGG…PPSTSITITS (232 aa). The N-acetyltransferase domain occupies 352–508; sequence GEVMHSHESP…CLSQSSTYLS (157 aa). The tract at residues 531–846 is N-acetyl-gamma-glutamyl-phosphate reductase; it reads FRVGLIGARG…LDELASIKNE (316 aa). Cys-665 is an active-site residue.

This sequence in the N-terminal section; belongs to the acetylglutamate kinase family. The protein in the C-terminal section; belongs to the NAGSA dehydrogenase family.

Its subcellular location is the mitochondrion. The catalysed reaction is N-acetyl-L-glutamate 5-semialdehyde + phosphate + NADP(+) = N-acetyl-L-glutamyl 5-phosphate + NADPH + H(+). It carries out the reaction N-acetyl-L-glutamate + ATP = N-acetyl-L-glutamyl 5-phosphate + ADP. The protein operates within amino-acid biosynthesis; L-arginine biosynthesis; N(2)-acetyl-L-ornithine from L-glutamate: step 2/4. It functions in the pathway amino-acid biosynthesis; L-arginine biosynthesis; N(2)-acetyl-L-ornithine from L-glutamate: step 3/4. The protein is Bifunctional protein argC, mitochondrial (argC) of Dictyostelium discoideum (Social amoeba).